Here is a 163-residue protein sequence, read N- to C-terminus: MRLTSKGRYAVTAMLDVALNSETGPVPLADISERQGISLSYLEQLFSRLRKNGLVSSVRGPGGGYLLGKDAGSIAVGEVISAVDESVDATRCQGKGGCQGGDKCLTHALWRDLSDRLTGFLNNITLGELVNNQEVLDVSGRQQSHETQRTTRAQDAIDVKLRA.

One can recognise an HTH rrf2-type domain in the interval 2–131; it reads RLTSKGRYAV…NNITLGELVN (130 aa). Residues 28 to 51 constitute a DNA-binding region (H-T-H motif); sequence LADISERQGISLSYLEQLFSRLRK. Cysteine 92, cysteine 98, and cysteine 104 together coordinate [2Fe-2S] cluster.

[2Fe-2S] cluster is required as a cofactor.

Functionally, regulates the transcription of several operons and genes involved in the biogenesis of Fe-S clusters and Fe-S-containing proteins. The sequence is that of HTH-type transcriptional regulator IscR from Enterobacter sp. (strain 638).